Here is a 101-residue protein sequence, read N- to C-terminus: Helix-loop-helix protein 17 (101 aa).

The segment at Gly14 to Met27 is basic motif. In terms of domain architecture, bHLH spans Gly14–Gln68. Residues His28–Gln68 form a helix-loop-helix motif region.

In terms of tissue distribution, expressed in neuronal tissues of the head, including sheath cells of the cephalic sensilla (CEPsh) glia.

The protein resides in the nucleus. Functionally, probable transcription factor that regulates the expression of dopamine receptors dop-1, dop-2 and dop-3 and thus dopamine-dependent behaviors. May act redundantly with hlh-31 and hlh-32 to regulate ventral CEPsh glia functions. May play a role in chemotactic responses in larvae. This is Helix-loop-helix protein 17 from Caenorhabditis elegans.